The chain runs to 107 residues: MSVSQVTDASFKQEVINNDLPVLVDFWAPWCGPCRMVSPVVDAIAEEYESSIKVVKINTDDNPTIAAEYGIRSIPTLMIFKSGERVDTVIGAVPKSTLESTLNKYIS.

Residues 2–107 (SVSQVTDASF…LESTLNKYIS (106 aa)) form the Thioredoxin domain. Catalysis depends on nucleophile residues cysteine 31 and cysteine 34. Cysteine 31 and cysteine 34 are disulfide-bonded.

It belongs to the thioredoxin family.

Its subcellular location is the plastid. The protein resides in the chloroplast. In terms of biological role, participates in various redox reactions through the reversible oxidation of its active center dithiol to a disulfide and catalyzes dithiol-disulfide exchange reactions. This Porphyra purpurea (Red seaweed) protein is Thioredoxin (trxA).